A 253-amino-acid polypeptide reads, in one-letter code: 5-oxoprolinase subunit A (253 aa).

This sequence belongs to the LamB/PxpA family. In terms of assembly, forms a complex composed of PxpA, PxpB and PxpC.

The catalysed reaction is 5-oxo-L-proline + ATP + 2 H2O = L-glutamate + ADP + phosphate + H(+). In terms of biological role, catalyzes the cleavage of 5-oxoproline to form L-glutamate coupled to the hydrolysis of ATP to ADP and inorganic phosphate. In Bacillus anthracis (strain A0248), this protein is 5-oxoprolinase subunit A.